Here is a 177-residue protein sequence, read N- to C-terminus: Macro domain-containing protein in non 5'region (177 aa).

The 177-residue stretch at 1 to 177 (MSTSVSPVVR…VEFEEVLAMR (177 aa)) folds into the Macro domain.

Belongs to the MacroD-type family.

The chain is Macro domain-containing protein in non 5'region from Streptomyces griseus.